Here is a 344-residue protein sequence, read N- to C-terminus: GTPase Obg (344 aa).

Polar residues predominate over residues 1–12; it reads MFVDSASFSVSS. The interval 1–36 is disordered; sequence MFVDSASFSVSSGKGGPGCASFRREKHVPLGGPDGG. The region spanning 1–158 is the Obg domain; sequence MFVDSASFSV…RNIRLELKLI (158 aa). The OBG-type G domain occupies 159–341; that stretch reads ADVGLVGFPN…LKFGLLEILK (183 aa). Residues 165–172, 190–194, 212–215, 280–283, and 322–324 each bind GTP; these read GFPNVGKS, FTTLT, DIPG, TRLD, and SSV. Mg(2+)-binding residues include Ser172 and Thr192.

The protein belongs to the TRAFAC class OBG-HflX-like GTPase superfamily. OBG GTPase family. In terms of assembly, monomer. Requires Mg(2+) as cofactor.

Its subcellular location is the cytoplasm. An essential GTPase which binds GTP, GDP and possibly (p)ppGpp with moderate affinity, with high nucleotide exchange rates and a fairly low GTP hydrolysis rate. Plays a role in control of the cell cycle, stress response, ribosome biogenesis and in those bacteria that undergo differentiation, in morphogenesis control. The sequence is that of GTPase Obg from Campylobacter fetus subsp. fetus (strain 82-40).